The primary structure comprises 317 residues: Mitochondrial outer membrane protein porin 4 (317 aa).

Positions 1-30 (MEAETECKVPGVYSETGIPVEDPAPGLNSD) are disordered.

The protein belongs to the eukaryotic mitochondrial porin (TC 1.B.8.1) family.

It localises to the mitochondrion outer membrane. Forms a channel through the mitochondrial outer membrane that allows diffusion of small hydrophilic molecules. The channel adopts an open conformation at low or zero membrane potential and a closed conformation at potentials above 30-40 mV. The open state has a weak anion selectivity whereas the closed state is cation-selective. This Oryza sativa subsp. japonica (Rice) protein is Mitochondrial outer membrane protein porin 4 (VDAC4).